Consider the following 97-residue polypeptide: Non-pathogenic pore-forming peptide amoebapore A (97 aa).

A signal peptide spans 1–20 (MKAIVFVLIFAVAFAVTLRQ). The Saposin B-type domain occupies 21–97 (GPIVCNLCTG…NAICAKIHAC (77 aa)). Disulfide bonds link C25-C97, C28-C91, and C55-C66.

Monomer. Homodimer. Hexamer; formed during insertion in the membrane.

It localises to the cytoplasmic granule. Forms pores in the cell membrane of host cells. Implicated in the cytolytic activity of the parasite. Pore forming activity is lower compared to the activity of ameobapore A from the pathogenic strain HM-1:IMSS. This Entamoeba histolytica protein is Non-pathogenic pore-forming peptide amoebapore A.